The primary structure comprises 199 residues: Regulator of G-protein signaling 16 (199 aa).

S-palmitoyl cysteine attachment occurs at residues Cys-2 and Cys-12. Residues 64–180 (SFQSLLNSKN…LKSPAYRDLA (117 aa)) enclose the RGS domain. Phosphotyrosine occurs at positions 167 and 176.

Interacts with GNAI1 and GNAQ. Interacts with GNAI3, GNAI3 and GNAO1. Post-translationally, palmitoylated on Cys-2 and/or Cys-12. In terms of processing, phosphorylated. Phosphorylation at Tyr-167 by EGFR enhances GTPase accelerating (GAP) activity toward GNAI1. In terms of tissue distribution, predominantly found in the retina. Some expression has been found in the liver.

Its subcellular location is the membrane. Its function is as follows. Regulates G protein-coupled receptor signaling cascades. Inhibits signal transduction by increasing the GTPase activity of G protein alpha subunits, thereby driving them into their inactive GDP-bound form. Plays an important role in the phototransduction cascade by regulating the lifetime and effective concentration of activated transducin alpha. May regulate extra and intracellular mitogenic signals. This Rattus norvegicus (Rat) protein is Regulator of G-protein signaling 16 (Rgs16).